Here is a 99-residue protein sequence, read N- to C-terminus: Ubiquitin-related modifier 1 (99 aa).

At Gly99 the chain carries 1-thioglycine. Gly99 participates in a covalent cross-link: Glycyl lysine isopeptide (Gly-Lys) (interchain with K-? in acceptor proteins).

Belongs to the URM1 family. As to quaternary structure, homodimer; homodimerization may provide an autoprotection to the highly active C-terminal residue before attacking its substrates. Interacts with NCS2 and NCS6. Forms a conjugate with the target protein AHP1. C-terminal thiocarboxylation occurs in 2 steps, it is first acyl-adenylated (-COAMP) via the hesA/moeB/thiF part of UBA4, then thiocarboxylated (-COSH) via the rhodanese domain of UBA4.

It localises to the cytoplasm. It is found in the nucleus. It functions in the pathway tRNA modification; 5-methoxycarbonylmethyl-2-thiouridine-tRNA biosynthesis. Functionally, acts as a sulfur carrier required for 2-thiolation of mcm(5)S(2)U at tRNA wobble positions of cytosolic tRNA(Lys), tRNA(Glu) and tRNA(Gln). Serves as sulfur donor in tRNA 2-thiolation reaction by being thiocarboxylated (-COSH) at its C-terminus by the MOCS3 homolog UBA4. The sulfur is then transferred to tRNA to form 2-thiolation of mcm(5)S(2)U. Prior mcm(5) tRNA modification by the elongator complex is required for 2-thiolation. Also acts as a ubiquitin-like protein (UBL) that is covalently conjugated via an isopeptide bond to lysine residues of target proteins such as AHP1. The thiocarboxylated form serves as substrate for conjugation and oxidative stress specifically induces the formation of UBL-protein conjugates. This Saccharomyces cerevisiae (strain RM11-1a) (Baker's yeast) protein is Ubiquitin-related modifier 1.